Reading from the N-terminus, the 367-residue chain is Putative methylthioribose-1-phosphate isomerase (367 aa).

Substrate is bound by residues 65–67 (RGA), arginine 106, and glutamine 218. The active-site Proton donor is the aspartate 259. Residue 269-270 (NK) coordinates substrate.

Belongs to the eIF-2B alpha/beta/delta subunits family. MtnA subfamily.

The catalysed reaction is 5-(methylsulfanyl)-alpha-D-ribose 1-phosphate = 5-(methylsulfanyl)-D-ribulose 1-phosphate. Its function is as follows. Catalyzes the interconversion of methylthioribose-1-phosphate (MTR-1-P) into methylthioribulose-1-phosphate (MTRu-1-P). The polypeptide is Putative methylthioribose-1-phosphate isomerase (Sulfolobus acidocaldarius (strain ATCC 33909 / DSM 639 / JCM 8929 / NBRC 15157 / NCIMB 11770)).